The sequence spans 118 residues: Mitochondrial import inner membrane translocase subunit Tim10 B (118 aa).

A Twin CX3C motif motif is present at residues 31–55 (CFQRCVPSLHHRALDAEEEACLHSC). 2 cysteine pairs are disulfide-bonded: Cys31-Cys55 and Cys35-Cys51. The interval 89–118 (SAVPHATAEQLETSPSRSLPSGNLGKGGAG) is disordered. Positions 98 to 109 (QLETSPSRSLPS) are enriched in polar residues.

Belongs to the small Tim family. In terms of assembly, component of the TIM22 complex, which core is composed of TIMM22, associated with TIMM10 (TIMM10A and/or TIMM10B), TIMM9, AGK and TIMM29.

The protein resides in the mitochondrion inner membrane. Functionally, component of the TIM22 complex, a complex that mediates the import and insertion of multi-pass transmembrane proteins into the mitochondrial inner membrane. The TIM22 complex forms a twin-pore translocase that uses the membrane potential as the external driving force. In the TIM22 complex, it may act as a docking point for the soluble 70 kDa complex that guides the target proteins in transit through the aqueous mitochondrial intermembrane space. The chain is Mitochondrial import inner membrane translocase subunit Tim10 B (TIMM10B) from Bos taurus (Bovine).